We begin with the raw amino-acid sequence, 162 residues long: Putative 4-hydroxy-4-methyl-2-oxoglutarate aldolase (162 aa).

Substrate is bound by residues 75 to 78 and Arg97; that span reads GDML. Asp98 contacts a divalent metal cation.

This sequence belongs to the class II aldolase/RraA-like family. Homotrimer. Requires a divalent metal cation as cofactor.

It catalyses the reaction 4-hydroxy-4-methyl-2-oxoglutarate = 2 pyruvate. The catalysed reaction is oxaloacetate + H(+) = pyruvate + CO2. Functionally, catalyzes the aldol cleavage of 4-hydroxy-4-methyl-2-oxoglutarate (HMG) into 2 molecules of pyruvate. Also contains a secondary oxaloacetate (OAA) decarboxylase activity due to the common pyruvate enolate transition state formed following C-C bond cleavage in the retro-aldol and decarboxylation reactions. The protein is Putative 4-hydroxy-4-methyl-2-oxoglutarate aldolase of Azotobacter vinelandii (strain DJ / ATCC BAA-1303).